The primary structure comprises 286 residues: Acetyl-coenzyme A carboxylase carboxyl transferase subunit beta (286 aa).

In terms of domain architecture, CoA carboxyltransferase N-terminal spans isoleucine 23 to glutamate 286. Residues cysteine 27, cysteine 30, cysteine 46, and cysteine 49 each contribute to the Zn(2+) site. The segment at cysteine 27–cysteine 49 adopts a C4-type zinc-finger fold.

It belongs to the AccD/PCCB family. In terms of assembly, acetyl-CoA carboxylase is a heterohexamer composed of biotin carboxyl carrier protein (AccB), biotin carboxylase (AccC) and two subunits each of ACCase subunit alpha (AccA) and ACCase subunit beta (AccD). Zn(2+) serves as cofactor.

Its subcellular location is the cytoplasm. It catalyses the reaction N(6)-carboxybiotinyl-L-lysyl-[protein] + acetyl-CoA = N(6)-biotinyl-L-lysyl-[protein] + malonyl-CoA. It functions in the pathway lipid metabolism; malonyl-CoA biosynthesis; malonyl-CoA from acetyl-CoA: step 1/1. Component of the acetyl coenzyme A carboxylase (ACC) complex. Biotin carboxylase (BC) catalyzes the carboxylation of biotin on its carrier protein (BCCP) and then the CO(2) group is transferred by the transcarboxylase to acetyl-CoA to form malonyl-CoA. The protein is Acetyl-coenzyme A carboxylase carboxyl transferase subunit beta of Wigglesworthia glossinidia brevipalpis.